A 401-amino-acid chain; its full sequence is MAKEKFDRSKPHLNVGTIGHVDHGKTTLTAAITTTLAKAIGGKNKAVAYDQIDNAPEEKARGITIATSHQEYETANRHYAHVDCPGHADYVKNMITGAAQMDAAILVVSATDGPMPQTKEHILLARQVGVPYVIVFINKADMLAADERAEMIEMVEMDVRELLNKYSFPGDTTPIVHGSAVKALEGDESEIGMPAILKLMEALDTFVPNPKRVIDKPFLMPVEDVFSITGRGTVATGRVEQGVLKVNDEVEIIGIRPTTKTVVTGIEMFRKLLDQAEAGDNIGALLRGTKKEEIERGQVLAKPGSITPHKKFAAEVYVLTKDEGGRHTPFINNYRPQFYFRTTDVTGVCNLPNGVEMVMPGDNVSLTVELISPIAMDKGLKFAIREGGRTIGSGVVAEITE.

Residues 10–211 (KPHLNVGTIG…ALDTFVPNPK (202 aa)) form the tr-type G domain. Residues 19–26 (GHVDHGKT) form a G1 region. 19–26 (GHVDHGKT) is a GTP binding site. Threonine 26 provides a ligand contact to Mg(2+). A G2 region spans residues 62–66 (GITIA). The segment at 83–86 (DCPG) is G3. Residues 83–87 (DCPGH) and 138–141 (NKAD) each bind GTP. The G4 stretch occupies residues 138–141 (NKAD). The segment at 179-181 (SAV) is G5.

Belongs to the TRAFAC class translation factor GTPase superfamily. Classic translation factor GTPase family. EF-Tu/EF-1A subfamily. As to quaternary structure, monomer.

It is found in the cytoplasm. It carries out the reaction GTP + H2O = GDP + phosphate + H(+). In terms of biological role, GTP hydrolase that promotes the GTP-dependent binding of aminoacyl-tRNA to the A-site of ribosomes during protein biosynthesis. The protein is Elongation factor Tu of Leptospira interrogans serogroup Icterohaemorrhagiae serovar copenhageni (strain Fiocruz L1-130).